A 156-amino-acid chain; its full sequence is Small ribosomal subunit protein uS7 (156 aa).

The protein belongs to the universal ribosomal protein uS7 family. As to quaternary structure, part of the 30S ribosomal subunit. Contacts proteins S9 and S11.

In terms of biological role, one of the primary rRNA binding proteins, it binds directly to 16S rRNA where it nucleates assembly of the head domain of the 30S subunit. Is located at the subunit interface close to the decoding center, probably blocks exit of the E-site tRNA. In Shewanella halifaxensis (strain HAW-EB4), this protein is Small ribosomal subunit protein uS7.